The sequence spans 722 residues: Ataxin-7-like protein 2 (722 aa).

4 disordered regions span residues 106 to 228, 288 to 317, 347 to 403, and 531 to 600; these read LSKL…PPKT, NSRK…LPSS, SRAS…DCHY, and AITS…GCRG. Positions 181–191 are enriched in pro residues; the sequence is GKPPMAPPSKE. In terms of domain architecture, SCA7 spans 230–297; it reads RKMARKECDL…NSRKGESPKE (68 aa). Positions 290–311 are enriched in basic and acidic residues; the sequence is RKGESPKEKSPGRKEQVLERPS. Residues 541 to 556 show a composition bias toward low complexity; sequence PSPSFSKLPPSKASKS. Residues 558 to 569 are compositionally biased toward basic and acidic residues; that stretch reads KGKDGVEVEAPS. At Ser-575 the chain carries Phosphoserine.

In Homo sapiens (Human), this protein is Ataxin-7-like protein 2 (ATXN7L2).